The chain runs to 216 residues: Snake venom metalloproteinase HT-1 (216 aa).

Residues 8-94 enclose the Disintegrin domain; it reads PPVCGNELLE…DCPMDDFHRN (87 aa). Residues Val10, Asn13, Leu15, Glu17, Glu20, and Asp23 each contribute to the Ca(2+) site. Intrachain disulfides connect Cys11/Cys40, Cys22/Cys35, Cys24/Cys30, Cys34/Cys57, Cys48/Cys54, Cys53/Cys79, Cys66/Cys86, Cys73/Cys105, Cys98/Cys110, Cys117/Cys167, Cys132/Cys178, Cys145/Cys155, Cys162/Cys204, and Cys198/Cys209. Residues 72–74 carry the D/ECD-tripeptide motif; that stretch reads ECD. N-linked (GlcNAc...) asparagine glycosylation is present at Asn175.

This sequence belongs to the venom metalloproteinase (M12B) family. P-III subfamily. P-IIIa sub-subfamily. In terms of assembly, monomer. Zn(2+) is required as a cofactor. As to expression, expressed by the venom gland.

It is found in the secreted. In terms of biological role, zinc protease from snake venom that induces hemorrhage. The polypeptide is Snake venom metalloproteinase HT-1 (Crotalus ruber ruber (Red diamond rattlesnake)).